The sequence spans 133 residues: Large ribosomal subunit protein uL22c (133 aa).

Belongs to the universal ribosomal protein uL22 family. Part of the 50S ribosomal subunit.

It is found in the plastid. The protein localises to the chloroplast. Its function is as follows. This protein binds specifically to 23S rRNA. Functionally, the globular domain of the protein is located near the polypeptide exit tunnel on the outside of the subunit, while an extended beta-hairpin is found that lines the wall of the exit tunnel in the center of the 70S ribosome. This chain is Large ribosomal subunit protein uL22c (rpl22), found in Manihot esculenta (Cassava).